Here is a 349-residue protein sequence, read N- to C-terminus: Sterol-4-alpha-carboxylate 3-dehydrogenase ERG26, decarboxylating (349 aa).

Residues 11-17 (GGSGFLG), 62-63 (DL), and 84-86 (CAS) contribute to the NADP(+) site. The substrate site is built by serine 124 and tyrosine 151. Residues tyrosine 151, lysine 155, and 179–182 (PAGI) contribute to the NADP(+) site. Catalysis depends on lysine 155, which acts as the Proton donor.

The protein belongs to the 3-beta-HSD family. As to quaternary structure, heterotetramer of ERG25, ERG26, ERG27 and ERG28. ERG28 acts as a scaffold to tether ERG27 and other 4,4-demethylation-related enzymes, forming a demethylation enzyme complex, in the endoplasmic reticulum.

It is found in the endoplasmic reticulum membrane. It carries out the reaction 4beta-methylzymosterol-4alpha-carboxylate + NADP(+) = 3-dehydro-4-methylzymosterol + CO2 + NADPH. The protein operates within steroid biosynthesis; zymosterol biosynthesis; zymosterol from lanosterol: step 4/6. Inhibited by FR171456, a natural product with broad antifungal activity. Sterol-4-alpha-carboxylate 3-dehydrogenase; part of the third module of ergosterol biosynthesis pathway that includes the late steps of the pathway. ERG26 is a catalytic component of the C-4 demethylation complex that catalyzes the oxidative decarboxylation that results in a reduction of the 3-beta-hydroxy group at the C-3 carbon to an oxo group. The third module or late pathway involves the ergosterol synthesis itself through consecutive reactions that mainly occur in the endoplasmic reticulum (ER) membrane. Firstly, the squalene synthase ERG9 catalyzes the condensation of 2 farnesyl pyrophosphate moieties to form squalene, which is the precursor of all steroids. Squalene synthase is crucial for balancing the incorporation of farnesyl diphosphate (FPP) into sterol and nonsterol isoprene synthesis. Secondly, the squalene epoxidase ERG1 catalyzes the stereospecific oxidation of squalene to (S)-2,3-epoxysqualene, which is considered to be a rate-limiting enzyme in steroid biosynthesis. Then, the lanosterol synthase ERG7 catalyzes the cyclization of (S)-2,3 oxidosqualene to lanosterol, a reaction that forms the sterol core. In the next steps, lanosterol is transformed to zymosterol through a complex process involving various demethylation, reduction and desaturation reactions. The lanosterol 14-alpha-demethylase ERG11 (also known as CYP51) catalyzes C14-demethylation of lanosterol to produce 4,4'-dimethyl cholesta-8,14,24-triene-3-beta-ol, which is critical for ergosterol biosynthesis. The C-14 reductase ERG24 reduces the C14=C15 double bond of 4,4-dimethyl-cholesta-8,14,24-trienol to produce 4,4-dimethyl-cholesta-8,24-dienol. 4,4-dimethyl-cholesta-8,24-dienol is substrate of the C-4 demethylation complex ERG25-ERG26-ERG27 in which ERG25 catalyzes the three-step monooxygenation required for the demethylation of 4,4-dimethyl and 4alpha-methylsterols, ERG26 catalyzes the oxidative decarboxylation that results in a reduction of the 3-beta-hydroxy group at the C-3 carbon to an oxo group, and ERG27 is responsible for the reduction of the keto group on the C-3. ERG28 has a role as a scaffold to help anchor ERG25, ERG26 and ERG27 to the endoplasmic reticulum and ERG29 regulates the activity of the iron-containing C4-methylsterol oxidase ERG25. Then, the sterol 24-C-methyltransferase ERG6 catalyzes the methyl transfer from S-adenosyl-methionine to the C-24 of zymosterol to form fecosterol. The C-8 sterol isomerase ERG2 catalyzes the reaction which results in unsaturation at C-7 in the B ring of sterols and thus converts fecosterol to episterol. The sterol-C5-desaturase ERG3 then catalyzes the introduction of a C-5 double bond in the B ring to produce 5-dehydroepisterol. The C-22 sterol desaturase ERG5 further converts 5-dehydroepisterol into ergosta-5,7,22,24(28)-tetraen-3beta-ol by forming the C-22(23) double bond in the sterol side chain. Finally, ergosta-5,7,22,24(28)-tetraen-3beta-ol is substrate of the C-24(28) sterol reductase ERG4 to produce ergosterol. The protein is Sterol-4-alpha-carboxylate 3-dehydrogenase ERG26, decarboxylating of Saccharomyces cerevisiae (strain ATCC 204508 / S288c) (Baker's yeast).